The primary structure comprises 177 residues: Large ribosomal subunit protein eL20 (177 aa).

This sequence belongs to the eukaryotic ribosomal protein eL20 family.

This is Large ribosomal subunit protein eL20 (RpL18A) from Spodoptera frugiperda (Fall armyworm).